The chain runs to 123 residues: MRPFILLALLFSVAIAFNIFRDEAVPEEQLLSVRRSTRGADKKADSSDSSDSNEKDDKVTEGSGSGDTPVEAEEQLRRVARDVEEASGEEEGSGAAQVTSAPVRFVRSVDVEGSGSGDEAPAE.

The signal sequence occupies residues 1 to 16 (MRPFILLALLFSVAIA). The disordered stretch occupies residues 32 to 123 (SVRRSTRGAD…SGSGDEAPAE (92 aa)). The segment covering 38–60 (RGADKKADSSDSSDSNEKDDKVT) has biased composition (basic and acidic residues). O-linked (Xyl...) (chondroitin sulfate) serine glycans are attached at residues S63 and S65. A compositionally biased stretch (basic and acidic residues) spans 74-84 (EQLRRVARDVE). O-linked (Xyl...) (chondroitin sulfate) serine glycosylation is found at S87, S93, and S114.

In Caenorhabditis briggsae, this protein is Chondroitin proteoglycan 8 (cpg-8).